A 266-amino-acid polypeptide reads, in one-letter code: PTS system mannose-specific EIIC component (266 aa).

M1 is modified (N-formylmethionine). The Periplasmic segment spans residues 1–4; that stretch reads MEIT. The PTS EIIC type-4 domain maps to 1–237; the sequence is MEITTLQIVL…GVIGTVMAVL (237 aa). An intramembrane segment occupies 5-43; the sequence is TLQIVLVFIVACIAGMGSILDEFQFHRPLIACTLVGIVL. At 44-46 the chain is on the periplasmic side; the sequence is GDM. An intramembrane segment occupies 47 to 86; the sequence is KTGIIIGGTLEMIALGWMNIGAAVAPDAALASIISTILVI. Topologically, residues 87–90 are periplasmic; it reads AGHQ. A membrane pass occupies residues 91–124; that stretch reads SIGAGIALAIPLAAAGQVLTIIVRTITVAFQHAA. At 125–132 the chain is on the cytoplasmic side; it reads DKAADNGN. Residues 133–160 are membrane-embedded; the sequence is LTAISWIHVSSLFLQAMRVAIPAVIVAL. Topologically, residues 161 to 176 are periplasmic; the sequence is SVGTSEVQNMLNAIPE. The segment at 177-200 is a transmembrane helix; sequence VVTNGLNIAGGMIVVVGYAMVINM. At 201–207 the chain is on the cytoplasmic side; sequence MRAGYLM. A membrane pass occupies residues 208–218; the sequence is PFFYLGFVTAA. At 219–224 the chain is on the periplasmic side; that stretch reads FTNFNL. At 225–242 the chain is embedded in the membrane; that stretch reads VALGVIGTVMAVLYIQLS. Residues 243–266 are Cytoplasmic-facing; it reads PKYNRVAGAPAQAAGNNDLDNELD.

Homotrimer of protomers that are composed of two subunits, IIC and IID.

The protein resides in the cell inner membrane. The phosphoenolpyruvate-dependent sugar phosphotransferase system (sugar PTS), a major carbohydrate active transport system, catalyzes the phosphorylation of incoming sugar substrates concomitantly with their translocation across the cell membrane. The enzyme II ManXYZ PTS system is involved in mannose transport. This Escherichia coli O157:H7 protein is PTS system mannose-specific EIIC component (manY).